A 236-amino-acid chain; its full sequence is Predicted GPI-anchored protein 43 (236 aa).

The N-terminal stretch at 1–24 is a signal peptide; it reads MHQRNHHSILLTLLLYLQSIVALA. N-linked (GlcNAc...) asparagine glycans are attached at residues Asn-192, Asn-195, and Asn-198. A lipid anchor (GPI-anchor amidated glycine) is attached at Gly-208. Residues 209–236 constitute a propeptide, removed in mature form; sequence SVCLTSSYLNSPIIILCAILTGTLFAMY.

Its subcellular location is the cell membrane. The polypeptide is Predicted GPI-anchored protein 43 (PGA43) (Candida albicans (strain SC5314 / ATCC MYA-2876) (Yeast)).